The chain runs to 25 residues: GLFKVLGSVAKHLLPHVAPVIAEKL.

Leucine 25 is modified (leucine amide).

The protein belongs to the frog skin active peptide (FSAP) family. Caerin subfamily. Caerin-1.7.1 does not have any antibacterial activity. Expressed by the skin dorsal glands.

It localises to the secreted. Functionally, antibacterial peptide, that adopts an alpha helical conformation which can disrupt bacterial membranes. Each caerin displays a different antimicrobial specificity. This Ranoidea xanthomera (Northern orange-eyed tree frog) protein is Caerin-1.7.